Consider the following 504-residue polypeptide: Sodium/proline symporter (504 aa).

13 helical membrane passes run 8–28 (LITF…AYYY), 50–70 (SAGA…AVYL), 73–93 (LVEG…WLLV), 127–147 (LVSA…GVVA), 163–183 (ALWY…FLAV), 189–209 (IQAT…LLSF), 240–260 (LGLL…HILA), 281–301 (WMVL…PYFF), 324–344 (LLFN…AVMS), 374–394 (ELVW…IWIA), 405–425 (VEFA…FSLF), 434–454 (AMAG…VVPA), and 461–481 (VYEM…ISLL).

The protein belongs to the sodium:solute symporter (SSF) (TC 2.A.21) family.

The protein localises to the cell inner membrane. It catalyses the reaction L-proline(in) + Na(+)(in) = L-proline(out) + Na(+)(out). Functionally, catalyzes the sodium-dependent uptake of extracellular L-proline. This is Sodium/proline symporter (putP) from Haemophilus influenzae (strain ATCC 51907 / DSM 11121 / KW20 / Rd).